The chain runs to 98 residues: Small ribosomal subunit protein eS24 (98 aa).

It belongs to the eukaryotic ribosomal protein eS24 family.

In Thermococcus gammatolerans (strain DSM 15229 / JCM 11827 / EJ3), this protein is Small ribosomal subunit protein eS24.